Reading from the N-terminus, the 230-residue chain is MASTMTPYFGIVVSLIAYGIGTLLFKHSKGFFLFTPLFVAMVLGIVFLKVGNFTFEEYNTGGKMISFFLEPATIAFAIPLYKQVDKLKKYWWQILSAIVVGSICSVVVVYIVAKAIGLDTAVMNSMLPQAATTAIALPISESIGGIPAITSFAVIFNAVIVYALGALFLKTFRVKHPIAKGLALGTAGHALGVAVGIEMGEVEAAMASIAVTVVGVVTVVVIPMFMPFIG.

8 helical membrane-spanning segments follow: residues 5 to 25, 30 to 50, 61 to 81, 92 to 112, 126 to 146, 149 to 169, 177 to 197, and 209 to 229; these read MTPY…TLLF, GFFL…FLKV, GGKM…IPLY, WQIL…VYIV, MLPQ…IGGI, ITSF…ALFL, PIAK…AVGI, and IAVT…MPFI.

It belongs to the CidB/LrgB family. LrgB subfamily.

It is found in the cell membrane. Inhibits the expression or activity of extracellular murein hydrolases by interacting, possibly with LrgA, with the holin-like protein CidA. The LrgAB and CidA proteins may affect the proton motive force of the membrane. May be involved in programmed cell death (PCD), possibly triggering PCD in response to antibiotics and environmental stresses. The protein is Antiholin-like protein LrgB of Bacillus mycoides (strain KBAB4) (Bacillus weihenstephanensis).